The sequence spans 174 residues: Probable carboxylesterase Culp5 (174 aa).

The active-site Nucleophile is the Ser-67. Cysteines 137 and 144 form a disulfide. Asp-141 is a catalytic residue. His-153 (proton donor/acceptor) is an active-site residue.

Belongs to the cutinase family.

Functionally, does not exhibit cutinase activity. This chain is Probable carboxylesterase Culp5, found in Mycobacterium tuberculosis (strain ATCC 25618 / H37Rv).